Here is a 705-residue protein sequence, read N- to C-terminus: MTKFGFLRLSYEKQDTLLKLLILSMAAVLSFSTRLFAVLRFESVIHEFDPYFNYRTTRFLAEEGFYKFHNWFDDRAWYPLGRIIGGTIYPGLMITSAAIYHVLHFFHITIDIRNVCVFLAPLFSSFTTIVTYHLTKELKDAGAGLLAAAMIAVVPGYISRSVAGSYDNEGIAIFCMLLTYYMWIKAVKTGSICWAAKCALAYFYMVSSWGGYVFLINLIPLHVLVLMLTGRFSHRIYVAYCTVYCLGTILSMQISFVGFQPVLSSEHMAAFGVFGLCQIHAFVDYLRSKLNPQQFEVLFRSVISLVGFVLLTVGALLMLTGKISPWTGRFYSLLDPSYAKNNIPIIASVSEHQPTTWSSYYFDLQLLVFMFPVGLYYCFSNLSDARIFIIMYGVTSMYFSAVMVRLMLVLAPVMCILSGIGVSQVLSTYMKNLDISRPDKKSKKQQDSTYPIKNEVASGMILVMAFFLITYTFHSTWVTSEAYSSPSIVLSARGGDGSRIIFDDFREAYYWLRHNTPEDAKVMSWWDYGYQITAMANRTILVDNNTWNNTHISRVGQAMASTEEKAYEIMRELDVSYVLVIFGGLTGYSSDDINKFLWMVRIGGSTDTGKHIKENDYYTPTGEFRVDREGSPVLLNCLMYKMCYYRFGQVYTEAKRPPGFDRVRNAEIGNKDFELDVLEEAYTTEHWLVRIYKVKDLDNRGLSRT.

Residues 1–17 (MTKFGFLRLSYEKQDTL) are Cytoplasmic-facing. The chain crosses the membrane as a helical span at residues 18–38 (LKLLILSMAAVLSFSTRLFAV). At 39–119 (LRFESVIHEF…IDIRNVCVFL (81 aa)) the chain is on the lumenal side. The short motif at 47–49 (EFD) is the DXD motif 1 element. D49 lines the Mn(2+) pocket. Residues 120 to 138 (APLFSSFTTIVTYHLTKEL) traverse the membrane as a helical segment. Over 139–140 (KD) the chain is Cytoplasmic. The chain crosses the membrane as a helical span at residues 141 to 158 (AGAGLLAAAMIAVVPGYI). The Lumenal portion of the chain corresponds to 159-169 (SRSVAGSYDNE). D167 and E169 together coordinate Mn(2+). A DXD motif 2 motif is present at residues 167–169 (DNE). A helical membrane pass occupies residues 170–189 (GIAIFCMLLTYYMWIKAVKT). The Cytoplasmic segment spans residues 190–191 (GS). The helical transmembrane segment at 192–206 (ICWAAKCALAYFYMV) threads the bilayer. Residues 207 to 211 (SSWGG) lie on the Lumenal side of the membrane. A helical transmembrane segment spans residues 212 to 228 (YVFLINLIPLHVLVLML). The Cytoplasmic portion of the chain corresponds to 229–233 (TGRFS). The helical transmembrane segment at 234–259 (HRIYVAYCTVYCLGTILSMQISFVGF) threads the bilayer. The Lumenal portion of the chain corresponds to 260 to 267 (QPVLSSEH). A helical transmembrane segment spans residues 268–287 (MAAFGVFGLCQIHAFVDYLR). Over 288–300 (SKLNPQQFEVLFR) the chain is Cytoplasmic. A helical transmembrane segment spans residues 301 to 321 (SVISLVGFVLLTVGALLMLTG). Over 322–356 (KISPWTGRFYSLLDPSYAKNNIPIIASVSEHQPTT) the chain is Lumenal. The SVSE motif motif lies at 348–351 (SVSE). A helical transmembrane segment spans residues 357–379 (WSSYYFDLQLLVFMFPVGLYYCF). Over 380–385 (SNLSDA) the chain is Cytoplasmic. A helical membrane pass occupies residues 386–402 (RIFIIMYGVTSMYFSAV). Residues 403-406 (MVRL) lie on the Lumenal side of the membrane. R405 contacts dolichyl diphosphooligosaccharide. The helical transmembrane segment at 407–428 (MLVLAPVMCILSGIGVSQVLST) threads the bilayer. Residues 429–453 (YMKNLDISRPDKKSKKQQDSTYPIK) lie on the Cytoplasmic side of the membrane. The chain crosses the membrane as a helical span at residues 454–473 (NEVASGMILVMAFFLITYTF). At 474–705 (HSTWVTSEAY…DLDNRGLSRT (232 aa)) the chain is on the lumenal side. Positions 525 to 527 (WWD) are interacts with target acceptor peptide in protein substrate. Positions 525 to 529 (WWDYG) match the WWDYG motif motif. Y530 contacts dolichyl diphosphooligosaccharide. 2 N-linked (GlcNAc...) asparagine glycosylation sites follow: N537 and N544. An N-linked (GlcNAc...) (high mannose) asparagine glycan is attached at N548. A DK motif motif is present at residues 592 to 599 (DINKFLWM).

It belongs to the STT3 family. In terms of assembly, component of the oligosaccharyltransferase (OST) complex. There are 2 OST complexes, OST-A and OST-B, which contain STT3A or STT3B as catalytic subunit, respectively. OST-A and OST-B contain common core subunits RPN1, RPN2, OST48, OST4, DAD1 and TMEM258, and OST-A contains DC2/OSTC and KRTCAP2/KCP2 specific accessory subunits. OST-A complex assembly occurs through the formation of 3 subcomplexes. Subcomplex 1 contains RPN1 and TMEM258, subcomplex 2 contains the OST-A-specific subunits STT3A, DC2/OSTC, and KCP2 as well as the core subunit OST4, and subcomplex 3 contains RPN2, DAD1, and OST48. The OST-A complex can form stable complexes with the Sec61 complex or with both the Sec61 and TRAP complexes. The cofactor is Mg(2+). Requires Mn(2+) as cofactor. Expressed at high levels in placenta, liver, muscle and pancreas, and at very low levels in brain, lung and kidney. Expressed in skin fibroblasts (at protein level).

Its subcellular location is the endoplasmic reticulum. The protein localises to the endoplasmic reticulum membrane. It catalyses the reaction a di-trans,poly-cis-dolichyl diphosphooligosaccharide + L-asparaginyl-[protein] = N(4)-(oligosaccharide-(1-&gt;4)-N-acetyl-beta-D-glucosaminyl-(1-&gt;4)-N-acetyl-beta-D-glucosaminyl)-L-asparaginyl-[protein] + a di-trans,poly-cis-dolichyl diphosphate + H(+). It functions in the pathway protein modification; protein glycosylation. With respect to regulation, STT3A, but not STT3B, is specifically inhibited by the N-glycosylation inhibitor NGI-235, which prevents productive binding pose of the glycan donor in the active site of STT3A. Functionally, catalytic subunit of the oligosaccharyl transferase (OST) complex that catalyzes the initial transfer of a defined glycan (Glc(3)Man(9)GlcNAc(2) in eukaryotes) from the lipid carrier dolichol-pyrophosphate to an asparagine residue within an Asn-X-Ser/Thr consensus motif in nascent polypeptide chains, the first step in protein N-glycosylation. N-glycosylation occurs cotranslationally and the complex associates with the Sec61 complex at the channel-forming translocon complex that mediates protein translocation across the endoplasmic reticulum (ER). All subunits are required for a maximal enzyme activity. This subunit contains the active site and the acceptor peptide and donor lipid-linked oligosaccharide (LLO) binding pockets. STT3A is present in the majority of OST complexes and mediates cotranslational N-glycosylation of most sites on target proteins, while STT3B-containing complexes are required for efficient post-translational glycosylation and mediate glycosylation of sites that have been skipped by STT3A. STT3A-containing OST-A complex is also required to prevent hyperglycosylation of some target proteins by preventing glycosylation of facultative sites before folding of target proteins is completed. The sequence is that of Dolichyl-diphosphooligosaccharide--protein glycosyltransferase subunit STT3A from Homo sapiens (Human).